The primary structure comprises 272 residues: tRNA pseudouridine synthase B (272 aa).

Aspartate 38 serves as the catalytic Nucleophile.

Belongs to the pseudouridine synthase TruB family. Type 1 subfamily.

The catalysed reaction is uridine(55) in tRNA = pseudouridine(55) in tRNA. Responsible for synthesis of pseudouridine from uracil-55 in the psi GC loop of transfer RNAs. The protein is tRNA pseudouridine synthase B of Campylobacter jejuni subsp. jejuni serotype O:2 (strain ATCC 700819 / NCTC 11168).